Reading from the N-terminus, the 207-residue chain is MTVANWQVRDLTLILRTGEMKSRLEQARTDFGALLSETVYFQPSAIRLGEFDDEYIHSRQELVYVYLREDIARQCALRRNLPSNSSNFGTMATAIPPWLMNARSLNRVMQERCDQGGLVNYYQGPHTNQFFLAIMPSNCFVRFGTDIINNENYGFYARGGNYTEEGEDDDDEMDDEGEAGGAEPRECQIGNLINYPIIALGSCDLSA.

The segment at 160–183 (GNYTEEGEDDDDEMDDEGEAGGAE) is disordered. The span at 164–178 (EEGEDDDDEMDDEGE) shows a compositional bias: acidic residues.

In terms of biological role, involved in tumor formation and increases auxin and cytokinin effects in host plants. The chain is Protein 6b (6b) from Agrobacterium tumefaciens (strain Ach5).